The sequence spans 398 residues: Argininosuccinate synthase (398 aa).

Residue 10-18 (AYSGGLDTS) participates in ATP binding. Tyr87 is an L-citrulline binding site. Gly117 serves as a coordination point for ATP. Thr119, Asn123, and Asp124 together coordinate L-aspartate. Asn123 is an L-citrulline binding site. Arg127, Ser175, Glu260, and Tyr272 together coordinate L-citrulline.

The protein belongs to the argininosuccinate synthase family. Type 1 subfamily. In terms of assembly, homotetramer.

It localises to the cytoplasm. It catalyses the reaction L-citrulline + L-aspartate + ATP = 2-(N(omega)-L-arginino)succinate + AMP + diphosphate + H(+). Its pathway is amino-acid biosynthesis; L-arginine biosynthesis; L-arginine from L-ornithine and carbamoyl phosphate: step 2/3. This chain is Argininosuccinate synthase, found in Lactococcus lactis subsp. lactis (strain IL1403) (Streptococcus lactis).